The chain runs to 862 residues: DNA mismatch repair protein MutS (862 aa).

608–615 contacts ATP; that stretch reads GPNMAGKS.

This sequence belongs to the DNA mismatch repair MutS family.

Its function is as follows. This protein is involved in the repair of mismatches in DNA. It is possible that it carries out the mismatch recognition step. This protein has a weak ATPase activity. The polypeptide is DNA mismatch repair protein MutS (Bacteroides fragilis (strain YCH46)).